Here is a 115-residue protein sequence, read N- to C-terminus: uncharacterized protein (115 aa).

This is an uncharacterized protein from Ostreid herpesvirus 1 (isolate France) (OsHV-1).